Reading from the N-terminus, the 238-residue chain is tRNA (guanine-N(7)-)-methyltransferase (238 aa).

S-adenosyl-L-methionine-binding residues include Glu-68, Glu-93, Asp-120, and Asp-143. Asp-143 is a catalytic residue. Substrate is bound by residues Lys-147, Asp-179, and 216 to 219; that span reads TKFE.

It belongs to the class I-like SAM-binding methyltransferase superfamily. TrmB family.

It catalyses the reaction guanosine(46) in tRNA + S-adenosyl-L-methionine = N(7)-methylguanosine(46) in tRNA + S-adenosyl-L-homocysteine. It participates in tRNA modification; N(7)-methylguanine-tRNA biosynthesis. Catalyzes the formation of N(7)-methylguanine at position 46 (m7G46) in tRNA. The protein is tRNA (guanine-N(7)-)-methyltransferase of Stutzerimonas stutzeri (strain A1501) (Pseudomonas stutzeri).